The chain runs to 503 residues: Probable cytosol aminopeptidase (503 aa).

Residues Lys268 and Asp273 each coordinate Mn(2+). Lys280 is an active-site residue. 3 residues coordinate Mn(2+): Asp291, Asp350, and Glu352. Residue Arg354 is part of the active site.

This sequence belongs to the peptidase M17 family. Mn(2+) is required as a cofactor.

The protein localises to the cytoplasm. The catalysed reaction is Release of an N-terminal amino acid, Xaa-|-Yaa-, in which Xaa is preferably Leu, but may be other amino acids including Pro although not Arg or Lys, and Yaa may be Pro. Amino acid amides and methyl esters are also readily hydrolyzed, but rates on arylamides are exceedingly low.. It catalyses the reaction Release of an N-terminal amino acid, preferentially leucine, but not glutamic or aspartic acids.. Its function is as follows. Presumably involved in the processing and regular turnover of intracellular proteins. Catalyzes the removal of unsubstituted N-terminal amino acids from various peptides. The sequence is that of Probable cytosol aminopeptidase from Nocardia farcinica (strain IFM 10152).